Reading from the N-terminus, the 117-residue chain is Putative hydrolase fragment YghX (117 aa).

The disordered stretch occupies residues 91–117 (DGLSSVGGYPGNDDKGRELQQQVDPTN).

This Escherichia coli (strain K12) protein is Putative hydrolase fragment YghX (yghX).